Here is a 208-residue protein sequence, read N- to C-terminus: NAD(P)H-quinone oxidoreductase subunit I (208 aa).

4Fe-4S ferredoxin-type domains are found at residues 55–84 (GRIH…VDWV) and 95–124 (RNYS…MTEE). Residues Cys-64, Cys-67, Cys-70, Cys-74, Cys-104, Cys-107, Cys-110, and Cys-114 each coordinate [4Fe-4S] cluster.

It belongs to the complex I 23 kDa subunit family. In terms of assembly, NDH-1 is composed of at least 11 different subunits. It depends on [4Fe-4S] cluster as a cofactor.

The protein localises to the cellular thylakoid membrane. The catalysed reaction is a plastoquinone + NADH + (n+1) H(+)(in) = a plastoquinol + NAD(+) + n H(+)(out). It carries out the reaction a plastoquinone + NADPH + (n+1) H(+)(in) = a plastoquinol + NADP(+) + n H(+)(out). Its function is as follows. NDH-1 shuttles electrons from an unknown electron donor, via FMN and iron-sulfur (Fe-S) centers, to quinones in the respiratory and/or the photosynthetic chain. The immediate electron acceptor for the enzyme in this species is believed to be plastoquinone. Couples the redox reaction to proton translocation, and thus conserves the redox energy in a proton gradient. This Prochlorococcus marinus (strain MIT 9215) protein is NAD(P)H-quinone oxidoreductase subunit I.